The sequence spans 227 residues: Phosphatidylserine decarboxylase proenzyme (227 aa).

Catalysis depends on Ser-184, which acts as the Schiff-base intermediate with substrate; via pyruvic acid. At Ser-184 the chain carries Pyruvic acid (Ser); by autocatalysis.

Belongs to the phosphatidylserine decarboxylase family. PSD-A subfamily. In terms of assembly, heterodimer of a large membrane-associated beta subunit and a small pyruvoyl-containing alpha subunit. Pyruvate serves as cofactor. In terms of processing, is synthesized initially as an inactive proenzyme. Formation of the active enzyme involves a self-maturation process in which the active site pyruvoyl group is generated from an internal serine residue via an autocatalytic post-translational modification. Two non-identical subunits are generated from the proenzyme in this reaction, and the pyruvate is formed at the N-terminus of the alpha chain, which is derived from the carboxyl end of the proenzyme. The post-translation cleavage follows an unusual pathway, termed non-hydrolytic serinolysis, in which the side chain hydroxyl group of the serine supplies its oxygen atom to form the C-terminus of the beta chain, while the remainder of the serine residue undergoes an oxidative deamination to produce ammonia and the pyruvoyl prosthetic group on the alpha chain.

It is found in the cell membrane. The enzyme catalyses a 1,2-diacyl-sn-glycero-3-phospho-L-serine + H(+) = a 1,2-diacyl-sn-glycero-3-phosphoethanolamine + CO2. Its pathway is phospholipid metabolism; phosphatidylethanolamine biosynthesis; phosphatidylethanolamine from CDP-diacylglycerol: step 2/2. Catalyzes the formation of phosphatidylethanolamine (PtdEtn) from phosphatidylserine (PtdSer). The chain is Phosphatidylserine decarboxylase proenzyme from Ehrlichia ruminantium (strain Gardel).